The primary structure comprises 400 residues: MSSKLVLVLNCGSSSLKFAIIDALNGDEYLSGLAECFHLPEARIKWKMDGGKHEAALGAGAAHSEALNFIVNTILAQKPELSAQLTAIGHRIVHGGEKYTSSVVIDETVIQGIKDSASFAPLHNPAHLIGIAEALKSFPHLADKNVAVFDTAFHQTMPEESYLYALPYKLYKEHGIRRYGAHGTSHFYVTQEAAKMLNKPVEEVNIITCHLGNGGSVSAIRNGKCVDTSMGLTPLEGLVMGTRSGDIDPAIVFHLHDALGMSVDDINKLLTKESGLLGLTEVTSDCRYVEDNYATKEDAKRAMDVYCHRLAKYIGSYTALMEGRLDAVVFTGGIGENAAMVRELSLGKLGVLGFEVDHERNLAARFGKSGFINKEGTTLAMVIPTNEELVIAQDACRLTA.

Asn-10 provides a ligand contact to Mg(2+). Lys-17 provides a ligand contact to ATP. Arg-91 provides a ligand contact to substrate. Residue Asp-150 is the Proton donor/acceptor of the active site. ATP-binding positions include 210–214 (HLGNG), 285–287 (DCR), and 333–337 (GIGEN). A Mg(2+)-binding site is contributed by Glu-387.

Belongs to the acetokinase family. Homodimer. Mg(2+) is required as a cofactor. Mn(2+) serves as cofactor.

It is found in the cytoplasm. It carries out the reaction acetate + ATP = acetyl phosphate + ADP. The protein operates within metabolic intermediate biosynthesis; acetyl-CoA biosynthesis; acetyl-CoA from acetate: step 1/2. Functionally, catalyzes the formation of acetyl phosphate from acetate and ATP. Can also catalyze the reverse reaction. The sequence is that of Acetate kinase from Cronobacter sakazakii (strain ATCC BAA-894) (Enterobacter sakazakii).